The sequence spans 351 residues: Thiamine-phosphate synthase (351 aa).

Residues 1 to 128 (MLNSNTKDHE…SKIASEIRYE (128 aa)) form a unknown region. A thiamine-phosphate synthase region spans residues 129–351 (IYTVEIDLLS…MILKELSHEN (223 aa)). 4-amino-2-methyl-5-(diphosphooxymethyl)pyrimidine-binding positions include 180–184 (QHRFK) and N212. D213 and D232 together coordinate Mg(2+). S251 is a 4-amino-2-methyl-5-(diphosphooxymethyl)pyrimidine binding site. 2-[(2R,5Z)-2-carboxy-4-methylthiazol-5(2H)-ylidene]ethyl phosphate is bound at residue 277 to 279 (TTT). K280 contacts 4-amino-2-methyl-5-(diphosphooxymethyl)pyrimidine. G307 provides a ligand contact to 2-[(2R,5Z)-2-carboxy-4-methylthiazol-5(2H)-ylidene]ethyl phosphate.

This sequence belongs to the thiamine-phosphate synthase family. Mg(2+) serves as cofactor.

It catalyses the reaction 2-[(2R,5Z)-2-carboxy-4-methylthiazol-5(2H)-ylidene]ethyl phosphate + 4-amino-2-methyl-5-(diphosphooxymethyl)pyrimidine + 2 H(+) = thiamine phosphate + CO2 + diphosphate. The catalysed reaction is 2-(2-carboxy-4-methylthiazol-5-yl)ethyl phosphate + 4-amino-2-methyl-5-(diphosphooxymethyl)pyrimidine + 2 H(+) = thiamine phosphate + CO2 + diphosphate. The enzyme catalyses 4-methyl-5-(2-phosphooxyethyl)-thiazole + 4-amino-2-methyl-5-(diphosphooxymethyl)pyrimidine + H(+) = thiamine phosphate + diphosphate. It functions in the pathway cofactor biosynthesis; thiamine diphosphate biosynthesis; thiamine phosphate from 4-amino-2-methyl-5-diphosphomethylpyrimidine and 4-methyl-5-(2-phosphoethyl)-thiazole: step 1/1. In terms of biological role, condenses 4-methyl-5-(beta-hydroxyethyl)thiazole monophosphate (THZ-P) and 2-methyl-4-amino-5-hydroxymethyl pyrimidine pyrophosphate (HMP-PP) to form thiamine monophosphate (TMP). The sequence is that of Thiamine-phosphate synthase from Prochlorococcus marinus (strain AS9601).